Here is a 293-residue protein sequence, read N- to C-terminus: Haloalkane dehalogenase (293 aa).

In terms of domain architecture, AB hydrolase-1 spans Pro34 to Gly158. The Nucleophile role is filled by Asp106. Glu130 acts as the Proton donor in catalysis. Catalysis depends on His272, which acts as the Proton acceptor.

It belongs to the haloalkane dehalogenase family. Type 2 subfamily. In terms of assembly, monomer.

The enzyme catalyses 1-haloalkane + H2O = a halide anion + a primary alcohol + H(+). The protein operates within xenobiotic degradation; haloalkane degradation. It functions in the pathway xenobiotic degradation; 1,3-dichloropropene degradation. In terms of biological role, catalyzes hydrolytic cleavage of carbon-halogen bonds in halogenated aliphatic compounds, leading to the formation of the corresponding primary alcohols, halide ions and protons. Has a broad substrate specificity, as it is able to dehalogenate mono- and di- chlorinated and brominated alkanes (up to at least C10), and the two isomers of 1,3-dichloropropene to 3-chloroallyl alcohol; the highest activity was found with 1,2-dibromoethane, while no activity was observed with the analog 1,2-dichloroethane. This Pseudomonas pavonaceae protein is Haloalkane dehalogenase (dhaA).